The primary structure comprises 439 residues: NAD kinase (439 aa).

Residues serine 46, serine 48, serine 50, serine 55, and serine 64 each carry the phosphoserine modification.

This sequence belongs to the NAD kinase family. The cofactor is a divalent metal cation.

It carries out the reaction NAD(+) + ATP = ADP + NADP(+) + H(+). This is NAD kinase (Nadk) from Mus musculus (Mouse).